A 174-amino-acid chain; its full sequence is Ribosome maturation factor RimP (174 aa).

The protein belongs to the RimP family.

The protein resides in the cytoplasm. Functionally, required for maturation of 30S ribosomal subunits. The protein is Ribosome maturation factor RimP of Acinetobacter baumannii (strain SDF).